The chain runs to 238 residues: Complement C1q-like protein 4 (238 aa).

The signal sequence occupies residues 1 to 15; it reads MVLLLLVAIPLLVHS. Positions 37–102 are disordered; that stretch reads SRGQGPDGAP…PGPGPGGAAP (66 aa). Residues 53–96 enclose the Collagen-like domain; sequence PPGAKGEVGRRGKAGLRGPPGPPGPRGPPGEPGRPGPPGPPGPG. Pro residues predominate over residues 71 to 96; it reads PPGPPGPRGPPGEPGRPGPPGPPGPG. Residues 105-238 form the C1q domain; it reads GYVPRIAFYA…TFSGFIIYPD (134 aa).

As to quaternary structure, forms homooligomers, predominantly dimers or trimers. Forms heterooligomers with C1QL1, C1QL2 and C1QL3, when proteins are coexpressed; this interaction does not occur after secretion. Interacts with ADGRB3. In terms of tissue distribution, highly expressed in testis and adipose tissue, brown adipose tissue expressing higher levels than subcutaneous and visceral white adipose tissue. In gonadal fat pad, expressed at lower levels in adipocytes than in the stromal vascular fraction (VSP), which contains preadipocytes, fibroblasts, endothelial cells and occasional immune cells. Expression exhibits sexually dimorphism, with higher levels in females than in males.

Its subcellular location is the secreted. May regulate the number of excitatory synapses that are formed on hippocampus neurons. Has no effect on inhibitory synapses. May inhibit adipocyte differentiation at an early stage of the process. The sequence is that of Complement C1q-like protein 4 (C1ql4) from Mus musculus (Mouse).